The primary structure comprises 286 residues: Prohibitin-6, mitochondrial (286 aa).

Residues 1 to 12 (MNFKNVKVPKGP) are Mitochondrial matrix-facing. A helical; Signal-anchor for type II membrane protein membrane pass occupies residues 13–35 (GGGVIAAVVIGGLSLYGATHTLY). Topologically, residues 36–286 (NVDGGHRAIV…AMDLDVKPKK (251 aa)) are mitochondrial intermembrane.

This sequence belongs to the prohibitin family. As to quaternary structure, component of a prohibitin multimeric complex in mitochondrial membranes. Mostly expressed in proliferative tissues, including vasculature, shoot and root apical tissues.

It is found in the mitochondrion inner membrane. Prohibitin probably acts as a holdase/unfoldase for the stabilization of newly synthesized mitochondrial proteins. This chain is Prohibitin-6, mitochondrial (PHB6), found in Arabidopsis thaliana (Mouse-ear cress).